The following is a 285-amino-acid chain: DegV domain-containing protein CA_C3284 (285 aa).

Residues 3 to 280 (VKILTDSTSC…PGAIGIAYYT (278 aa)) form the DegV domain. Hexadecanoate contacts are provided by S59 and S91.

Functionally, may bind long-chain fatty acids, such as palmitate, and may play a role in lipid transport or fatty acid metabolism. This chain is DegV domain-containing protein CA_C3284, found in Clostridium acetobutylicum (strain ATCC 824 / DSM 792 / JCM 1419 / IAM 19013 / LMG 5710 / NBRC 13948 / NRRL B-527 / VKM B-1787 / 2291 / W).